Here is a 96-residue protein sequence, read N- to C-terminus: (4S)-4-hydroxy-5-phosphonooxypentane-2,3-dione isomerase (96 aa).

The ABM domain maps to 2-91 (HVTLVEINVH…MTGPRTKKVF (90 aa)).

The protein belongs to the LsrG family. In terms of assembly, homodimer.

Its subcellular location is the cytoplasm. The catalysed reaction is (2S)-2-hydroxy-3,4-dioxopentyl phosphate = 3-hydroxy-2,4-dioxopentyl phosphate. Functionally, involved in the degradation of phospho-AI-2, thereby terminating induction of the lsr operon and closing the AI-2 signaling cycle. Catalyzes the conversion of (4S)-4-hydroxy-5-phosphonooxypentane-2,3-dione (P-DPD) to 3-hydroxy-5-phosphonooxypentane-2,4-dione (P-HPD). This chain is (4S)-4-hydroxy-5-phosphonooxypentane-2,3-dione isomerase, found in Salmonella choleraesuis (strain SC-B67).